Reading from the N-terminus, the 423-residue chain is Lysosomal acid phosphatase (423 aa).

The signal sequence occupies residues 1 to 30; the sequence is MAGKRSGWSRAALLQLLLGVNLVVMPPTQA. Residues 31-380 are Lumenal-facing; the sequence is RSLRFVTLLY…QVASGPADTE (350 aa). The active-site Nucleophile is the His42. N-linked (GlcNAc...) asparagine glycosylation is found at Asn92, Asn133, Asn167, Asn177, Asn191, and Asn267. Intrachain disulfides connect Cys159/Cys370, Cys212/Cys310, and Cys345/Cys349. Residue Asp287 is the Proton donor of the active site. N-linked (GlcNAc...) asparagine glycans are attached at residues Asn322 and Asn331. The chain crosses the membrane as a helical span at residues 381 to 401; that stretch reads VIVALAVCGSILFLLIVLLLT. Topologically, residues 402 to 423 are cytoplasmic; that stretch reads VLFRMQAQPPGYRHVADGEDHA.

Belongs to the histidine acid phosphatase family. In terms of processing, the membrane-bound form is converted to the soluble form by sequential proteolytic processing. First, the C-terminal cytoplasmic tail is removed. Cleavage by a lysosomal protease releases the soluble form in the lysosome lumen.

Its subcellular location is the lysosome membrane. It localises to the lysosome lumen. It carries out the reaction a phosphate monoester + H2O = an alcohol + phosphate. The protein is Lysosomal acid phosphatase (ACP2) of Pongo abelii (Sumatran orangutan).